The following is a 344-amino-acid chain: Arginine N-succinyltransferase (344 aa).

Leu-125 contributes to the succinyl-CoA binding site. The active-site Proton donor is the His-229.

This sequence belongs to the arginine N-succinyltransferase family.

It catalyses the reaction succinyl-CoA + L-arginine = N(2)-succinyl-L-arginine + CoA + H(+). It functions in the pathway amino-acid degradation; L-arginine degradation via AST pathway; L-glutamate and succinate from L-arginine: step 1/5. Functionally, catalyzes the transfer of succinyl-CoA to arginine to produce N(2)-succinylarginine. This chain is Arginine N-succinyltransferase, found in Escherichia coli O17:K52:H18 (strain UMN026 / ExPEC).